The primary structure comprises 625 residues: 1-deoxy-D-xylulose-5-phosphate synthase (625 aa).

Residues H74 and 115–117 contribute to the thiamine diphosphate site; that span reads GHS. D146 lines the Mg(2+) pocket. Residues 147–148, N175, Y286, and E367 each bind thiamine diphosphate; that span reads GA. N175 serves as a coordination point for Mg(2+).

It belongs to the transketolase family. DXPS subfamily. Homodimer. Requires Mg(2+) as cofactor. Thiamine diphosphate is required as a cofactor.

It catalyses the reaction D-glyceraldehyde 3-phosphate + pyruvate + H(+) = 1-deoxy-D-xylulose 5-phosphate + CO2. It functions in the pathway metabolic intermediate biosynthesis; 1-deoxy-D-xylulose 5-phosphate biosynthesis; 1-deoxy-D-xylulose 5-phosphate from D-glyceraldehyde 3-phosphate and pyruvate: step 1/1. Functionally, catalyzes the acyloin condensation reaction between C atoms 2 and 3 of pyruvate and glyceraldehyde 3-phosphate to yield 1-deoxy-D-xylulose-5-phosphate (DXP). This chain is 1-deoxy-D-xylulose-5-phosphate synthase, found in Lachnoclostridium phytofermentans (strain ATCC 700394 / DSM 18823 / ISDg) (Clostridium phytofermentans).